The sequence spans 362 residues: MSKRLRVEDDFNPVYPYGYARNQNIPFLTPPFVSSDGFQNFPPGVLSLKLADPIAIVNGNVSLKVGGGLTLQDGTGKLTVNADPPLQLTNNKLGIALDAPFDVIDNKLTLLAGHGLSIITKETSTLPGLRNTLVVLTGKGIGTESTDNGGTVCVRVGEGGGLSFNNDGDLVAFNKKEDKRTLWTTPDTSPNCKIDQDKDSKLTLVLTKCGSQILANVSLIVVDGKYKIINNNTQPALKGFTIKLLFDENGVLMESSNLGKSYWNFRNENSIMSTAYEKAIGFMPNLVAYPKPTAGSKKYARDIVYGNIYLGGKPDQPVTIKTTFNQETGCEYSITFDFSWAKTYVNVEFETTSFTFSYIAQE.

Belongs to the adenoviridae fiber family. In terms of assembly, homotrimer. Interacts with host receptor CXCAR. Interacts (via N-terminal tail region) with pentons.

The protein localises to the virion. It is found in the host nucleus. Forms spikes that protrude from each vertex of the icosahedral capsid. Interacts with host receptor CXCAR to provide virion initial attachment to target cell. Fiber proteins are shed during virus entry, when virus is still at the cell surface. This is Fiber protein from Homo sapiens (Human).